We begin with the raw amino-acid sequence, 563 residues long: Arginine--tRNA ligase (563 aa).

Positions 120 to 130 match the 'HIGH' region motif; it reads PNIAKPFHIGH.

The protein belongs to the class-I aminoacyl-tRNA synthetase family. Monomer.

The protein resides in the cytoplasm. The catalysed reaction is tRNA(Arg) + L-arginine + ATP = L-arginyl-tRNA(Arg) + AMP + diphosphate. This Clostridium botulinum (strain Loch Maree / Type A3) protein is Arginine--tRNA ligase.